A 142-amino-acid chain; its full sequence is Metallothiol transferase FosB (142 aa).

Residues 5 to 120 (NVNHICFSVS…DGHKIELHTG (116 aa)) enclose the VOC domain. Mg(2+)-binding residues include His-8, His-67, and Glu-116. Residue Glu-116 is the Proton donor/acceptor of the active site.

Belongs to the fosfomycin resistance protein family. FosB subfamily. In terms of assembly, homodimer. It depends on Mg(2+) as a cofactor.

The protein resides in the cytoplasm. Functionally, metallothiol transferase which confers resistance to fosfomycin by catalyzing the addition of a thiol cofactor to fosfomycin. L-cysteine is probably the physiological thiol donor. The sequence is that of Metallothiol transferase FosB from Staphylococcus epidermidis (strain ATCC 35984 / DSM 28319 / BCRC 17069 / CCUG 31568 / BM 3577 / RP62A).